A 239-amino-acid chain; its full sequence is DNA repair protein RecO (239 aa).

This sequence belongs to the RecO family.

Its function is as follows. Involved in DNA repair and RecF pathway recombination. This is DNA repair protein RecO from Stenotrophomonas maltophilia (strain R551-3).